Consider the following 435-residue polypeptide: Nucleoredoxin (435 aa).

An N-acetylserine modification is found at Ser-2. Positions Pro-167–Val-321 constitute a Thioredoxin domain.

It belongs to the nucleoredoxin family. As to quaternary structure, associates with the phosphatase 2A holoenzyme. Interacts with PPP2CA; the interaction is direct. Interacts with DVL1 (via PDZ domain); the interaction is direct and regulated by oxidative stress.

The protein resides in the cytoplasm. The protein localises to the cytosol. It localises to the nucleus. It carries out the reaction [protein]-dithiol + NAD(+) = [protein]-disulfide + NADH + H(+). The catalysed reaction is [protein]-dithiol + NADP(+) = [protein]-disulfide + NADPH + H(+). Functionally, functions as a redox-dependent negative regulator of the Wnt signaling pathway, possibly by preventing ubiquitination of DVL3 by the BCR(KLHL12) complex. May also function as a transcriptional regulator act as a regulator of protein phosphatase 2A (PP2A). In Bos taurus (Bovine), this protein is Nucleoredoxin (NXN).